Reading from the N-terminus, the 23-residue chain is Acidic phospholipase A2 Cvv-E6c (23 aa).

Ca(2+) serves as cofactor. Contains 7 disulfide bonds. Expressed by the venom gland.

It is found in the secreted. It carries out the reaction a 1,2-diacyl-sn-glycero-3-phosphocholine + H2O = a 1-acyl-sn-glycero-3-phosphocholine + a fatty acid + H(+). In terms of biological role, snake venom phospholipase A2 (PLA2) that significantly inhibits ADP-induced platelet aggregation in platelet-rich plasma of human, rabbit and guinea pig. PLA2 catalyzes the calcium-dependent hydrolysis of the 2-acyl groups in 3-sn-phosphoglycerides. The protein is Acidic phospholipase A2 Cvv-E6c of Crotalus viridis viridis (Prairie rattlesnake).